The sequence spans 375 residues: Chaperone protein DnaJ (375 aa).

The J domain occupies 5–70 (DYYEILGVSK…QKRAAYDQYG (66 aa)). Residues 130 to 208 (GVTKEIRIPT…CHGHGRVEKS (79 aa)) form a CR-type zinc finger. Residues Cys-143, Cys-146, Cys-160, Cys-163, Cys-182, Cys-185, Cys-196, and Cys-199 each contribute to the Zn(2+) site. CXXCXGXG motif repeat units lie at residues 143 to 150 (CDVCHGSG), 160 to 167 (CPTCHGSG), 182 to 189 (CPHCQGRG), and 196 to 203 (CHKCHGHG).

The protein belongs to the DnaJ family. As to quaternary structure, homodimer. Zn(2+) is required as a cofactor.

The protein resides in the cytoplasm. Its function is as follows. Participates actively in the response to hyperosmotic and heat shock by preventing the aggregation of stress-denatured proteins and by disaggregating proteins, also in an autonomous, DnaK-independent fashion. Unfolded proteins bind initially to DnaJ; upon interaction with the DnaJ-bound protein, DnaK hydrolyzes its bound ATP, resulting in the formation of a stable complex. GrpE releases ADP from DnaK; ATP binding to DnaK triggers the release of the substrate protein, thus completing the reaction cycle. Several rounds of ATP-dependent interactions between DnaJ, DnaK and GrpE are required for fully efficient folding. Also involved, together with DnaK and GrpE, in the DNA replication of plasmids through activation of initiation proteins. The polypeptide is Chaperone protein DnaJ (Salmonella paratyphi A (strain ATCC 9150 / SARB42)).